The primary structure comprises 100 residues: MHLTLEFGGGLELLLEKSTKVHKVDLQPNDGDGKVVMKGLLAWVKSNLIKERPEMFLKGDSVRPGVLVLINDCDWELCGGLDAELEEKDVVVFISTLHGG.

Position 100 is a 1-thioglycine (Gly100). Residue Gly100 forms a Glycyl lysine isopeptide (Gly-Lys) (interchain with K-? in acceptor proteins) linkage.

Belongs to the URM1 family. Post-translationally, C-terminal thiocarboxylation occurs in 2 steps, it is first acyl-adenylated (-COAMP) via the hesA/moeB/thiF part of the MOCS3 homolog, then thiocarboxylated (-COSH) via the rhodanese domain of the MOCS3 homolog.

Its subcellular location is the cytoplasm. Its pathway is tRNA modification; 5-methoxycarbonylmethyl-2-thiouridine-tRNA biosynthesis. In terms of biological role, acts as a sulfur carrier required for 2-thiolation of mcm(5)S(2)U at tRNA wobble positions of cytosolic tRNA(Lys), tRNA(Glu) and tRNA(Gln). Serves as sulfur donor in tRNA 2-thiolation reaction by being thiocarboxylated (-COSH) at its C-terminus by MOCS3. The sulfur is then transferred to tRNA to form 2-thiolation of mcm(5)S(2)U. Also acts as a ubiquitin-like protein (UBL) that is covalently conjugated via an isopeptide bond to lysine residues of target proteins. The thiocarboxylated form serves as substrate for conjugation and oxidative stress specifically induces the formation of UBL-protein conjugates. This is Ubiquitin-related modifier 1 homolog from Oryza sativa subsp. japonica (Rice).